A 231-amino-acid chain; its full sequence is Response regulator Rre1 (231 aa).

The 118-residue stretch at 6 to 123 folds into the Response regulatory domain; that stretch reads SLLLVDDEPG…ELEAIVRNLL (118 aa). 4-aspartylphosphate is present on aspartate 56. In terms of domain architecture, HTH luxR-type spans 163-228; it reads PSPIKLDFTP…ELVRFALQHG (66 aa). Positions 187-206 form a DNA-binding region, H-T-H motif; that stretch reads NKEIAAQLKTSVRNVEKYVS.

In terms of assembly, interacts with histidine kinase Hik2; may accept phosphate from Hik2.

Functionally, member of at least 2 two-component regulatory systems Hik2/Rre1 and Hik34/Rre1. Responds to hyperosmotic stress, regulates expression of at least 24 genes including dnaK2 and hspA with Hik34 and sigB (sll0306), sll0528, slr1119, slr0852 and ssr3188 with Hik2. Responds to salt stress, regulates expression of at least 24 genes including adhA, dnaK2 and hspA with Hik34. Binds the adhA promoter. Phosphorylated by Hik2 in vitro. Phosphorylated protein has 10-fold higher affinity for DNA than unphosphorylated protein. The protein is Response regulator Rre1 of Synechocystis sp. (strain ATCC 27184 / PCC 6803 / Kazusa).